Here is a 343-residue protein sequence, read N- to C-terminus: Holliday junction branch migration complex subunit RuvB (343 aa).

Residues 4-193 (TDNLTAAQPQ…FGIVSRLEFY (190 aa)) are large ATPase domain (RuvB-L). ATP contacts are provided by residues leucine 32, arginine 33, glycine 74, lysine 77, threonine 78, threonine 79, 140-142 (EDY), arginine 183, tyrosine 193, and arginine 230. Threonine 78 provides a ligand contact to Mg(2+). The interval 194–264 (ENRDLATIVS…IADAALSMLD (71 aa)) is small ATPAse domain (RuvB-S). The segment at 267-343 (VQGLDVMDRK…YLHFGLPVEK (77 aa)) is head domain (RuvB-H). Residues arginine 322 and arginine 327 each coordinate DNA.

The protein belongs to the RuvB family. As to quaternary structure, homohexamer. Forms an RuvA(8)-RuvB(12)-Holliday junction (HJ) complex. HJ DNA is sandwiched between 2 RuvA tetramers; dsDNA enters through RuvA and exits via RuvB. An RuvB hexamer assembles on each DNA strand where it exits the tetramer. Each RuvB hexamer is contacted by two RuvA subunits (via domain III) on 2 adjacent RuvB subunits; this complex drives branch migration. In the full resolvosome a probable DNA-RuvA(4)-RuvB(12)-RuvC(2) complex forms which resolves the HJ.

It localises to the cytoplasm. It carries out the reaction ATP + H2O = ADP + phosphate + H(+). In terms of biological role, the RuvA-RuvB-RuvC complex processes Holliday junction (HJ) DNA during genetic recombination and DNA repair, while the RuvA-RuvB complex plays an important role in the rescue of blocked DNA replication forks via replication fork reversal (RFR). RuvA specifically binds to HJ cruciform DNA, conferring on it an open structure. The RuvB hexamer acts as an ATP-dependent pump, pulling dsDNA into and through the RuvAB complex. RuvB forms 2 homohexamers on either side of HJ DNA bound by 1 or 2 RuvA tetramers; 4 subunits per hexamer contact DNA at a time. Coordinated motions by a converter formed by DNA-disengaged RuvB subunits stimulates ATP hydrolysis and nucleotide exchange. Immobilization of the converter enables RuvB to convert the ATP-contained energy into a lever motion, pulling 2 nucleotides of DNA out of the RuvA tetramer per ATP hydrolyzed, thus driving DNA branch migration. The RuvB motors rotate together with the DNA substrate, which together with the progressing nucleotide cycle form the mechanistic basis for DNA recombination by continuous HJ branch migration. Branch migration allows RuvC to scan DNA until it finds its consensus sequence, where it cleaves and resolves cruciform DNA. The sequence is that of Holliday junction branch migration complex subunit RuvB from Neisseria meningitidis serogroup A / serotype 4A (strain DSM 15465 / Z2491).